The sequence spans 830 residues: DNA gyrase subunit A (830 aa).

Residues 34–514 enclose the Topo IIA-type catalytic domain; sequence LPDVRDGLKP…NHSDINMEDL (481 aa). The active-site O-(5'-phospho-DNA)-tyrosine intermediate is Tyr-122. A GyrA-box motif is present at residues 541-547; sequence QRRGGKG.

The protein belongs to the type II topoisomerase GyrA/ParC subunit family. As to quaternary structure, heterotetramer, composed of two GyrA and two GyrB chains. In the heterotetramer, GyrA contains the active site tyrosine that forms a transient covalent intermediate with DNA, while GyrB binds cofactors and catalyzes ATP hydrolysis.

The protein localises to the cytoplasm. The enzyme catalyses ATP-dependent breakage, passage and rejoining of double-stranded DNA.. In terms of biological role, a type II topoisomerase that negatively supercoils closed circular double-stranded (ds) DNA in an ATP-dependent manner to modulate DNA topology and maintain chromosomes in an underwound state. Negative supercoiling favors strand separation, and DNA replication, transcription, recombination and repair, all of which involve strand separation. Also able to catalyze the interconversion of other topological isomers of dsDNA rings, including catenanes and knotted rings. Type II topoisomerases break and join 2 DNA strands simultaneously in an ATP-dependent manner. The polypeptide is DNA gyrase subunit A (Buchnera aphidicola subsp. Acyrthosiphon pisum (strain APS) (Acyrthosiphon pisum symbiotic bacterium)).